Consider the following 170-residue polypeptide: Photosystem II extrinsic protein V (170 aa).

Residues 1 to 33 (MASLFASLGRSLIKLLIVLPVIIGLSISSPAMA) form the signal peptide. Heme c contacts are provided by C70, C73, H74, and H125.

This sequence belongs to the cytochrome c family. PsbV subfamily. In terms of assembly, PSII is composed of 1 copy each of membrane proteins PsbA, PsbB, PsbC, PsbD, PsbE, PsbF, PsbH, PsbI, PsbJ, PsbK, PsbL, PsbM, PsbT, PsbX, PsbY, Psb30/Ycf12, peripheral proteins PsbO, CyanoQ (PsbQ), PsbU, PsbV and a large number of cofactors. It forms dimeric complexes. Requires heme c as cofactor.

The protein localises to the cellular thylakoid membrane. One of the extrinsic, lumenal subunits of photosystem II (PSII). PSII is a light-driven water plastoquinone oxidoreductase, using light energy to abstract electrons from H(2)O, generating a proton gradient subsequently used for ATP formation. The extrinsic proteins stabilize the structure of photosystem II oxygen-evolving complex (OEC), the ion environment of oxygen evolution and protect the OEC against heat-induced inactivation. Low-potential cytochrome c that plays a role in the OEC of PSII. In Prochlorococcus marinus (strain MIT 9313), this protein is Photosystem II extrinsic protein V.